Consider the following 294-residue polypeptide: MSMLKNINTEKRNPRSFNLDSMSVQESVNLMIDEEYGVIEALKEQSLNIAKIVEVTSQALKKGGRIVYVGAGTSGRLGILDAVECPPTFSVDYNTIIGLIAGGEKAFIQAQEGAEDNPDFGKEDLLKINLTAKDVVIGIAASGRTPYVIGALEYANSIEATTIAISCTKQAKISSYADYNIEAVPGPEVLTGSTRLKAGTTQKLILNIISTLSMVSVGKVYQNLMVDVKPTNEKLVERSKNIICEATGVDYVTAQDFYMKANKSVKVAIVMILNDCDYEQALAILKKNNNFIKS.

The 164-residue stretch at 56-219 folds into the SIS domain; sequence TSQALKKGGR…STLSMVSVGK (164 aa). The Proton donor role is filled by E84. E115 is a catalytic residue.

This sequence belongs to the GCKR-like family. MurNAc-6-P etherase subfamily. As to quaternary structure, homodimer.

The enzyme catalyses N-acetyl-D-muramate 6-phosphate + H2O = N-acetyl-D-glucosamine 6-phosphate + (R)-lactate. Its pathway is amino-sugar metabolism; 1,6-anhydro-N-acetylmuramate degradation. The protein operates within amino-sugar metabolism; N-acetylmuramate degradation. It participates in cell wall biogenesis; peptidoglycan recycling. In terms of biological role, specifically catalyzes the cleavage of the D-lactyl ether substituent of MurNAc 6-phosphate, producing GlcNAc 6-phosphate and D-lactate. Together with AnmK, is also required for the utilization of anhydro-N-acetylmuramic acid (anhMurNAc) either imported from the medium or derived from its own cell wall murein, and thus plays a role in cell wall recycling. The protein is N-acetylmuramic acid 6-phosphate etherase of Francisella philomiragia subsp. philomiragia (strain ATCC 25017 / CCUG 19701 / FSC 153 / O#319-036).